Here is a 386-residue protein sequence, read N- to C-terminus: DNA replication and repair protein RecF (386 aa).

Residue 30 to 37 coordinates ATP; that stretch reads GSNGFGKT.

The protein belongs to the RecF family.

The protein localises to the cytoplasm. Its function is as follows. The RecF protein is involved in DNA metabolism; it is required for DNA replication and normal SOS inducibility. RecF binds preferentially to single-stranded, linear DNA. It also seems to bind ATP. This is DNA replication and repair protein RecF from Mycolicibacterium vanbaalenii (strain DSM 7251 / JCM 13017 / BCRC 16820 / KCTC 9966 / NRRL B-24157 / PYR-1) (Mycobacterium vanbaalenii).